The following is a 119-amino-acid chain: Ribonuclease P protein component (119 aa).

The protein belongs to the RnpA family. As to quaternary structure, consists of a catalytic RNA component (M1 or rnpB) and a protein subunit.

The enzyme catalyses Endonucleolytic cleavage of RNA, removing 5'-extranucleotides from tRNA precursor.. Its function is as follows. RNaseP catalyzes the removal of the 5'-leader sequence from pre-tRNA to produce the mature 5'-terminus. It can also cleave other RNA substrates such as 4.5S RNA. The protein component plays an auxiliary but essential role in vivo by binding to the 5'-leader sequence and broadening the substrate specificity of the ribozyme. The polypeptide is Ribonuclease P protein component (Nitrosococcus oceani (strain ATCC 19707 / BCRC 17464 / JCM 30415 / NCIMB 11848 / C-107)).